The following is a 947-amino-acid chain: MATRVRTASIWVPPLQERNSSWDRIRKLQGQESILGQGTPGLQPLPGTPRQKQKSRRIEKVLEWLFISQEQPKITKSWGPLSFMDVFVDFTWEEWQLLDPAQKCLYRSVMLENYSNLVSLGYQHTKPDIIFKLEQGEELCMVQAQVPNQTCPNTVWKIDDLMDWHQENKDKLGSTAKSFECTTFGKLCLLSTKYLSRQKPHKCGTHGKSLKYIDFTSDYARNNPNGFQVHGKSFFHSKHEQTVIGIKYCESIESGKTVNKKSQLMCQQMYMGEKPFGCSCCEKAFSSKSYLLVHQQTHAEEKPYGCNECGKDFSSKSYLIVHQRIHTGEKLHECSECRKTFSFHSQLVIHQRIHTGENPYECCECGKVFSRKDQLVSHQKTHSGQKPYVCNECGKAFGLKSQLIIHERIHTGEKPYECNECQKAFNTKSNLMVHQRTHTGEKPYVCSDCGKAFTFKSQLIVHQGIHTGVKPYGCIQCGKGFSLKSQLIVHQRSHTGMKPYVCNECGKAFRSKSYLIIHTRTHTGEKLHECNNCGKAFSFKSQLIIHQRIHTGENPYECHECGKAFSRKYQLISHQRTHAGEKPYECTDCGKAFGLKSQLIIHQRTHTGEKPFECSECQKAFNTKSNLIVHQRTHTGEKPYSCNECGKAFTFKSQLIVHKGVHTGVKPYGCSQCAKTFSLKSQLIVHQRSHTGVKPYGCSECGKAFRSKSYLIIHMRTHTGEKPHECRECGKSFSFNSQLIVHQRIHTGENPYECSECGKAFNRKDQLISHQRTHAGEKPYGCSECGKAFSSKSYLIIHMRTHSGEKPYECNECGKAFIWKSLLIVHERTHAGVNPYKCSQCEKSFSGKLRLLVHQRMHTREKPYECSECGKAFIRNSQLIVHQRTHSGEKPYGCNECGKTFSQKSILSAHQRTHTGEKPCKCTECGKAFCWKSQLIMHQRTHVDDKH.

Residues 81-152 form the KRAB domain; the sequence is LSFMDVFVDF…QAQVPNQTCP (72 aa). Residue serine 178 is modified to Phosphoserine; by TBK1. 24 C2H2-type zinc fingers span residues 276–298, 304–326, 332–354, 360–382, 388–410, 416–438, 444–466, 472–494, 500–522, 528–550, 556–578, 584–606, 612–634, 640–662, 668–690, 696–718, 724–746, 752–774, 780–802, 808–830, 836–858, 864–886, 892–914, and 920–942; these read FGCS…QQTH, YGCN…QRIH, HECS…QRIH, YECC…QKTH, YVCN…ERIH, YECN…QRTH, YVCS…QGIH, YGCI…QRSH, YVCN…TRTH, HECN…QRIH, YECH…QRTH, YECT…QRTH, FECS…QRTH, YSCN…KGVH, YGCS…QRSH, YGCS…MRTH, HECR…QRIH, YECS…QRTH, YECN…ERTH, YKCS…QRMH, YGCN…QRTH, and CKCT…QRTH.

This sequence belongs to the krueppel C2H2-type zinc-finger protein family. In terms of assembly, interacts (via the KRAB domain) with TRIM28 (via the RBCC domain); the interaction increases ZNF268 nuclear localization activity. Isoform 2 interacts with CHUK and IKBKB; the interaction is further increased in a TNF-alpha-dependent manner. Interacts with TOLLIP; this interaction is impaired by ZNF268 phosphorylation at Ser-178. Forms a ternary complex with TBK1 and SETD4; the interaction between SETD4 and TBK1 is ZNF268-dependent and leads to TBK1 monomethylation. Post-translationally, phosphorylation at Ser-178 stabilizes the protein by interfering with its binding to TOLLIP, hence impairing its degradation by Tollip-mediated selective autophagy system. Overexpressed in ovarian cancer tissues compared to normal ovarian tissues. Isoform 1 and isoform 2 are expressed in squamous epithelium tissues. Isoform 2 is overexpressed in squamous cervical cancer (at protein level). Expressed in blood cells. Isoform 1 is expressed in pancreas, lung, skeletal muscle, heart, placenta, liver, kidney and brain. Isoform 2 expressed in chronic lymphocytic leukemia (CLL) and several tumor cell lines. Isoform 3 is expressed in several tumor cells. Isoform 5 is expressed in fetal liver and several tumor cells. Isoform 6 is weakly expressed in brain, lung amd small intestin and in several tumor cells. Isoform 7 is expressed in fetal liver and several tumor cells.

It is found in the nucleus. The protein resides in the cytoplasm. In terms of biological role, acts as a transcriptional repressor. Inhibits erythroid differentiation and tumor cell proliferation. Plays a role during ovarian cancer development and progression. Its function is as follows. Contributes to cervical carcinogenesis in part through the TNF-alpha-induced NF-kappa-B signaling pathway by interacting with the I-kappa-B-kinase (IKK) core complex. Functionally, involved in the regulation of antiviral interferon signaling. During viral infection, recruits SETD4 to TBK1, leading to TBK1 monomethylation, which is critical for the assembly of TBK1 complex and IRF3 signaling. The sequence is that of Zinc finger protein 268 (ZNF268) from Homo sapiens (Human).